A 182-amino-acid polypeptide reads, in one-letter code: Large ribosomal subunit protein bL25 (182 aa).

Belongs to the bacterial ribosomal protein bL25 family. CTC subfamily. Part of the 50S ribosomal subunit; part of the 5S rRNA/L5/L18/L25 subcomplex. Contacts the 5S rRNA. Binds to the 5S rRNA independently of L5 and L18.

In terms of biological role, this is one of the proteins that binds to the 5S RNA in the ribosome where it forms part of the central protuberance. In Borrelia garinii subsp. bavariensis (strain ATCC BAA-2496 / DSM 23469 / PBi) (Borreliella bavariensis), this protein is Large ribosomal subunit protein bL25.